Reading from the N-terminus, the 328-residue chain is Biotin synthase (328 aa).

The Radical SAM core domain occupies 43-272 (NVVQKASLLS…KSTVRLSAGR (230 aa)). Residues C58, C62, and C65 each coordinate [4Fe-4S] cluster. Positions 103, 135, 195, and 267 each coordinate [2Fe-2S] cluster.

The protein belongs to the radical SAM superfamily. Biotin synthase family. In terms of assembly, homodimer. Requires [4Fe-4S] cluster as cofactor. [2Fe-2S] cluster is required as a cofactor.

The enzyme catalyses (4R,5S)-dethiobiotin + (sulfur carrier)-SH + 2 reduced [2Fe-2S]-[ferredoxin] + 2 S-adenosyl-L-methionine = (sulfur carrier)-H + biotin + 2 5'-deoxyadenosine + 2 L-methionine + 2 oxidized [2Fe-2S]-[ferredoxin]. The protein operates within cofactor biosynthesis; biotin biosynthesis; biotin from 7,8-diaminononanoate: step 2/2. Functionally, catalyzes the conversion of dethiobiotin (DTB) to biotin by the insertion of a sulfur atom into dethiobiotin via a radical-based mechanism. The chain is Biotin synthase from Allorhizobium ampelinum (strain ATCC BAA-846 / DSM 112012 / S4) (Agrobacterium vitis (strain S4)).